Reading from the N-terminus, the 531-residue chain is Tubulin-folding cofactor E (531 aa).

Residues 32 to 76 enclose the CAP-Gly domain; it reads GDVEGYSGTWIGVDWDQDGDGKHNGSVNGVFYFNGRSQSSASFVR. LRR repeat units follow at residues 84–109, 159–183, 185–213, 233–256, 260–284, 285–308, 318–342, 344–366, and 474–497; these read ITLL…MYVL, LPNL…ALCE, LPAL…NIRV, LPGI…SSSD, FNSL…KLSQ, LPCL…VNGT, FPSL…ALNG, PQLV…GVPR, and VGKL…LFLQ.

This sequence belongs to the TBCE family. As to quaternary structure, supercomplex made of cofactors A to E. Cofactors A and D function by capturing and stabilizing tubulin in a quasi-native conformation. Cofactor E binds to the cofactor D-tubulin complex; interaction with cofactor C then causes the release of tubulin polypeptides that are committed to the native state.

Its subcellular location is the cytoplasm. Essential tubulin-folding protein involved in the tubulin folding pathway. Not essential for cell viability. Probably involved in the binding of alpha-tubulin in the multimeric supercomplex. The protein is Tubulin-folding cofactor E (TFCE) of Arabidopsis thaliana (Mouse-ear cress).